Reading from the N-terminus, the 80-residue chain is Conotoxin Pu11.1 (80 aa).

Positions methionine 1–glycine 19 are cleaved as a signal peptide. Positions alanine 20 to lysine 42 are excised as a propeptide. Intrachain disulfides connect cysteine 46-cysteine 60, cysteine 53-cysteine 65, cysteine 59-cysteine 72, and cysteine 64-cysteine 79.

This sequence belongs to the conotoxin I3 superfamily. In terms of tissue distribution, expressed by the venom duct.

It localises to the secreted. The chain is Conotoxin Pu11.1 from Conus pulicarius (Flea-bitten cone).